The chain runs to 72 residues: Mitotic-spindle organizing protein 1 (72 aa).

Belongs to the MOZART1 family. Part of the gamma-tubulin complex.

It is found in the cytoplasm. Its subcellular location is the cytoskeleton. The protein resides in the microtubule organizing center. It localises to the centrosome. The protein localises to the spindle. Required for gamma-tubulin complex recruitment to the centrosome. The protein is Mitotic-spindle organizing protein 1 (mzt1) of Xenopus tropicalis (Western clawed frog).